Reading from the N-terminus, the 508-residue chain is Maturase K (508 aa).

The protein belongs to the intron maturase 2 family. MatK subfamily.

It localises to the plastid. The protein resides in the chloroplast. Its function is as follows. Usually encoded in the trnK tRNA gene intron. Probably assists in splicing its own and other chloroplast group II introns. The polypeptide is Maturase K (Pelargonium hortorum (Common geranium)).